The primary structure comprises 274 residues: TATA box-binding protein-associated factor RNA polymerase I subunit D (274 aa).

Over residues 1 to 19 the composition is skewed to polar residues; it reads MDSLNYTTACDSAVETENQ. Disordered stretches follow at residues 1-45 and 84-111; these read MDSL…RQRN and NKKRKRKKKKYKPTGRSVGRPKGRRTTR. Ser20 is subject to Phosphoserine. Basic residues predominate over residues 84-110; sequence NKKRKRKKKKYKPTGRSVGRPKGRRTT. Residues Ser132 and Ser229 each carry the phosphoserine modification.

In terms of assembly, component of the transcription factor SL1/TIF-IB complex, composed of TBP and at least TAF1A, TAF1B, TAF1C and TAF1D. Interacts with UBTF.

It is found in the nucleus. In terms of biological role, component of the transcription factor SL1/TIF-IB complex, which is involved in the assembly of the PIC (preinitiation complex) during RNA polymerase I-dependent transcription. The rate of PIC formation probably is primarily dependent on the rate of association of SL1/TIF-IB with the rDNA promoter. SL1/TIF-IB is involved in stabilization of nucleolar transcription factor 1/UBTF on rDNA. Formation of SL1/TIF-IB excludes the association of TBP with TFIID subunits. This Bos taurus (Bovine) protein is TATA box-binding protein-associated factor RNA polymerase I subunit D (TAF1D).